Here is a 450-residue protein sequence, read N- to C-terminus: MLVTAYLAFVGLLASCLGLELSRCRAKPPGRACSNPSFLRFQLDFYQVYFLALAADWLQAPYLYKLYQHYYFLEGQIAILYVCGLASTVLFGLVASSLVDWLGRKNSCVLFSLTYSLCCLTKLSQDYFVLLVGRALGGLSTALLFSAFEAWYIHEHVERHDFPAEWIPATFARAAFWNHVLAVVAGVAAEAVASWIGLGPVAPFVAAIPLLALAGALALRNWGENYDRQRAFSRTCAGGLRCLLSDRRVLLLGTIQALFESVIFIFVFLWTPVLDPHGAPLGIIFSSFMAASLLGSSLYRIATSKRYHLQPMHLLSLAVLIVVFSLFMLTFSTSPGQESPVESFIAFLLIELACGLYFPSMSFLRRKVIPETEQAGVLNWFRVPLHSLACLGLLVLHDSDRKTGTRNMFSICSAVMVMALLAVVGLFTVVRHDAELRVPSPTEEPYAPEL.

12 consecutive transmembrane segments (helical) span residues Met1–Leu21, Leu43–Leu63, Ile79–Val99, Phe128–Phe148, Ala174–Ser194, Trp195–Gly215, Val249–Leu269, Gly278–Leu298, Pro311–Phe331, Phe344–Leu364, Gly376–Leu396, and Phe409–Val429.

Belongs to the major facilitator superfamily. As to expression, expressed ubiquitously but at relatively higher levels in the olfactory bulb and the skeletal muscle.

It is found in the cell membrane. Functionally, mediates high-affinity intracellular uptake of the rare oligo-element molybdenum. The protein is Molybdate-anion transporter (MFSD5) of Homo sapiens (Human).